The sequence spans 348 residues: Heat-inducible transcription repressor HrcA (348 aa).

It belongs to the HrcA family.

Functionally, negative regulator of class I heat shock genes (grpE-dnaK-dnaJ and groELS operons). Prevents heat-shock induction of these operons. The protein is Heat-inducible transcription repressor HrcA of Thermodesulfovibrio yellowstonii (strain ATCC 51303 / DSM 11347 / YP87).